The following is a 956-amino-acid chain: Translation initiation factor IF-2 (956 aa).

The segment at 68-357 is disordered; that stretch reads APEAAAPKAP…GVSVPRGDGN (290 aa). 4 stretches are compositionally biased toward low complexity: residues 86–123, 141–156, 164–175, and 212–235; these read AKPA…APAV, PGNN…PRAG, PAAAPASGAGRP, and GPRP…RPAA. 2 stretches are compositionally biased toward gly residues: residues 236-257 and 276-324; these read GSGG…GGGN and RGAG…GAGR. A compositionally biased stretch (basic residues) spans 325–334; it reads GKQRKSKRAK. Residues 449–620 enclose the tr-type G domain; it reads ARPPVVTVMG…AVMLTADAAL (172 aa). The interval 458–465 is G1; it reads GHVDHGKT. 458 to 465 contributes to the GTP binding site; that stretch reads GHVDHGKT. Residues 483–487 are G2; sequence GITQH. The tract at residues 508 to 511 is G3; sequence DTPG. GTP-binding positions include 508–512 and 562–565; these read DTPGH and NKID. A G4 region spans residues 562–565; sequence NKID. A G5 region spans residues 598-600; sequence SAR.

It belongs to the TRAFAC class translation factor GTPase superfamily. Classic translation factor GTPase family. IF-2 subfamily.

The protein resides in the cytoplasm. Functionally, one of the essential components for the initiation of protein synthesis. Protects formylmethionyl-tRNA from spontaneous hydrolysis and promotes its binding to the 30S ribosomal subunits. Also involved in the hydrolysis of GTP during the formation of the 70S ribosomal complex. The sequence is that of Translation initiation factor IF-2 from Renibacterium salmoninarum (strain ATCC 33209 / DSM 20767 / JCM 11484 / NBRC 15589 / NCIMB 2235).